A 52-amino-acid chain; its full sequence is MASKNREIIKLKSSESSDMYWTVKNKRKTTGRLELKKYDRKLRRHVIFKEAK.

This sequence belongs to the bacterial ribosomal protein bL33 family.

This is Large ribosomal subunit protein bL33 from Chlamydia abortus (strain DSM 27085 / S26/3) (Chlamydophila abortus).